We begin with the raw amino-acid sequence, 498 residues long: Putative BTB/POZ domain-containing protein L788 (498 aa).

The BTB domain maps to 28 to 99 (TDIILVLEDD…FYGQKIKSGN (72 aa)).

It belongs to the mimivirus BTB/WD family.

The sequence is that of Putative BTB/POZ domain-containing protein L788 from Acanthamoeba polyphaga (Amoeba).